Reading from the N-terminus, the 369-residue chain is Cytokine receptor common subunit gamma (369 aa).

The N-terminal stretch at methionine 1 to glycine 22 is a signal peptide. The Extracellular portion of the chain corresponds to leucine 23 to alanine 262. N-linked (GlcNAc...) asparagine glycosylation is found at asparagine 24, asparagine 71, asparagine 75, and asparagine 84. Cysteine 62 and cysteine 72 are disulfide-bonded. A disulfide bond links cysteine 102 and cysteine 115. Residues alanine 156 to glutamate 253 enclose the Fibronectin type-III domain. N-linked (GlcNAc...) asparagine glycosylation occurs at asparagine 159. A disulfide bridge connects residues cysteine 182 and cysteine 231. Positions tryptophan 237 to serine 241 match the WSXWS motif motif. Asparagine 249 carries an N-linked (GlcNAc...) asparagine glycan. A helical membrane pass occupies residues valine 263–leucine 283. Topologically, residues glutamate 284–threonine 369 are cytoplasmic. A Box 1 motif motif is present at residues threonine 286 to lysine 294. Threonine 292 carries the phosphothreonine modification.

This sequence belongs to the type I cytokine receptor family. Type 5 subfamily. In terms of assembly, the gamma subunit is common to the IL2, IL4, IL7, IL15, IL21 and probably also the IL13 receptors. Interacts with SHB upon interleukin stimulation. Interacts with IL9. As to quaternary structure, (Microbial infection) Interacts with HTLV-1 accessory protein p12I.

It is found in the cell membrane. The protein localises to the cell surface. Functionally, common subunit for the receptors for a variety of interleukins. Probably in association with IL15RA, involved in the stimulation of neutrophil phagocytosis by IL15. In Homo sapiens (Human), this protein is Cytokine receptor common subunit gamma (IL2RG).